Here is a 209-residue protein sequence, read N- to C-terminus: Imidazole glycerol phosphate synthase subunit HisH (209 aa).

In terms of domain architecture, Glutamine amidotransferase type-1 spans 1–205 (MIAIIDYGMG…KGVVKQWKSS (205 aa)). Residue Cys79 is the Nucleophile of the active site. Residues His180 and Glu182 contribute to the active site.

As to quaternary structure, heterodimer of HisH and HisF.

The protein resides in the cytoplasm. The catalysed reaction is 5-[(5-phospho-1-deoxy-D-ribulos-1-ylimino)methylamino]-1-(5-phospho-beta-D-ribosyl)imidazole-4-carboxamide + L-glutamine = D-erythro-1-(imidazol-4-yl)glycerol 3-phosphate + 5-amino-1-(5-phospho-beta-D-ribosyl)imidazole-4-carboxamide + L-glutamate + H(+). It catalyses the reaction L-glutamine + H2O = L-glutamate + NH4(+). The protein operates within amino-acid biosynthesis; L-histidine biosynthesis; L-histidine from 5-phospho-alpha-D-ribose 1-diphosphate: step 5/9. IGPS catalyzes the conversion of PRFAR and glutamine to IGP, AICAR and glutamate. The HisH subunit catalyzes the hydrolysis of glutamine to glutamate and ammonia as part of the synthesis of IGP and AICAR. The resulting ammonia molecule is channeled to the active site of HisF. This is Imidazole glycerol phosphate synthase subunit HisH from Bacillus cytotoxicus (strain DSM 22905 / CIP 110041 / 391-98 / NVH 391-98).